The sequence spans 1791 residues: Sodium channel protein type 11 subunit alpha (1791 aa).

Residues 1–126 (MDDRCYPVIF…SIRSLAIRVS (126 aa)) lie on the Cytoplasmic side of the membrane. Residues 115 to 408 (FNSIRSLAIR…VTMAYEEQNK (294 aa)) form an I repeat. The chain crosses the membrane as a helical span at residues 127–148 (VHSLFSMFIIGTVIINCVFMAT). At 149–156 (GPAKNSNS) the chain is on the extracellular side. Residues 157-180 (NNTDIAECVFTGIYIFEALIKILA) form a helical membrane-spanning segment. Topologically, residues 181–192 (RGFILDEFSFLR) are cytoplasmic. The helical transmembrane segment at 193 to 212 (DPWNWLDSIVIGIAIVSYIP) threads the bilayer. Over 213-219 (GITIKLL) the chain is Extracellular. A helical; Voltage-sensor transmembrane segment spans residues 220 to 239 (PLRTFRVFRALKAISVVSRL). The Cytoplasmic portion of the chain corresponds to 240 to 255 (KVIVGALLRSVKKLVN). Residues 256-269 (VIILTFFCLSIFAL) form a helical membrane-spanning segment. The Extracellular segment spans residues 270-344 (VGQQLFMGSL…PDYNYTNFDN (75 aa)). Cysteine 283 and cysteine 322 are disulfide-bonded. N-linked (GlcNAc...) asparagine glycans are attached at residues asparagine 290 and asparagine 338. The segment at residues 345-369 (FGWSFLAMFRLMTQDSWEKLYQQTL) is an intramembrane region (pore-forming). At 370–376 (RTTGLYS) the chain is on the extracellular side. A helical membrane pass occupies residues 377–402 (VFFFIVVIFLGSFYLINLTLAVVTMA). Over 403–572 (YEEQNKNVAA…WLCVKKVLRT (170 aa)) the chain is Cytoplasmic. The stretch at 559–833 (CCPQWLCVKK…EGEARKTKVQ (275 aa)) is one II repeat. A helical membrane pass occupies residues 573–596 (VMTDPFTELAITICIIINTVFLAM). Topologically, residues 597-607 (EHHKMEASFEK) are extracellular. A helical membrane pass occupies residues 608 to 631 (MLNIGNLVFTSIFIAEMCLKIIAL). Residues 632–639 (DPYHYFRR) lie on the Cytoplasmic side of the membrane. Residues 640-659 (GWNIFDSIVALLSFADVMNC) traverse the membrane as a helical segment. Over 660–667 (VLQKRSWP) the chain is Extracellular. The chain crosses the membrane as a helical; Voltage-sensor span at residues 668–687 (FLRSFRVLRVFKLAKSWPTL). The Cytoplasmic segment spans residues 688–702 (NTLIKIIGNSVGALG). The chain crosses the membrane as a helical span at residues 703-725 (SLTVVLVIVIFIFSVVGMQLFGR). Residues 726–753 (SFNSQKSPKLCNPTGPTVSCLRHWHMGD) lie on the Extracellular side of the membrane. The segment at residues 754–774 (FWHSFLVVFRILCGEWIENMW) is an intramembrane region (pore-forming). The Extracellular portion of the chain corresponds to 775 to 785 (ECMQEANASSS). Cysteines 776 and 787 form a disulfide. Asparagine 781 is a glycosylation site (N-linked (GlcNAc...) asparagine). A helical transmembrane segment spans residues 786 to 811 (LCVIVFILITVIGKLVVLNLFIALLL). Over 812–1051 (NSFSNEERNG…WWNLRKTCYQ (240 aa)) the chain is Cytoplasmic. The stretch at 1044–1339 (NLRKTCYQIV…KKYYNAMKKL (296 aa)) is one III repeat. Residues 1052 to 1074 (IVKHSWFESFIIFVILLSSGALI) form a helical membrane-spanning segment. Residues 1075–1088 (FEDVHLENQPKIQE) are Extracellular-facing. The helical transmembrane segment at 1089–1114 (LLNCTDIIFTHIFILEMVLKWVAFGF) threads the bilayer. The Cytoplasmic segment spans residues 1115-1120 (GKYFTS). A helical membrane pass occupies residues 1121–1138 (AWCCLDFIIVIVSVTTLI). Asparagine 1139 is a topological domain (extracellular). Residues 1140-1161 (LMELKSFRTLRALRPLRALSQF) form a helical; Voltage-sensor membrane-spanning segment. At 1162–1180 (EGMKVVVNALIGAIPAILN) the chain is on the cytoplasmic side. A helical membrane pass occupies residues 1181–1202 (VLLVCLIFWLVFCILGVYFFSG). At 1203-1243 (KFGKCINGTDSVINYTIITNKSQCESGNFSWINQKVNFDNV) the chain is on the extracellular side. N-linked (GlcNAc...) asparagine glycans are attached at residues asparagine 1209, asparagine 1216, asparagine 1222, and asparagine 1230. An intramembrane region (pore-forming) is located at residues 1244–1265 (GNAYLALLQVATFKGWMDIIYA). Topologically, residues 1266–1281 (AVDSTEKEQQPEFESN) are extracellular. Residues 1282–1308 (SLGYIYFVVFIIFGSFFTLNLFIGVII) traverse the membrane as a helical segment. Residues 1309–1361 (DNFNQQQKKLGGQDIFMTEEQKKYYNAMKKLGSKKPQKPIPRPLNKCQGLVFD) are Cytoplasmic-facing. The stretch at 1348–1639 (IPRPLNKCQG…WEKFDPEATQ (292 aa)) is one IV repeat. Residues 1362–1385 (IVTSQIFDIIIISLIILNMISMMA) form a helical membrane-spanning segment. Over 1386-1396 (ESYNQPKAMKS) the chain is Extracellular. A helical transmembrane segment spans residues 1397–1420 (ILDHLNWVFVVIFTLECLIKIFAL). Residues 1421 to 1426 (RQYYFT) lie on the Cytoplasmic side of the membrane. Residues 1427-1450 (NGWNLFDCVVVLLSIVSTMISTLE) traverse the membrane as a helical segment. Topologically, residues 1451–1461 (NQEHIPFPPTL) are extracellular. A helical; Voltage-sensor transmembrane segment spans residues 1462–1484 (FRIVRLARIGRILRLVRAARGIR). Over 1485 to 1499 (TLLFALMMSLPSLFN) the chain is Cytoplasmic. Residues 1500 to 1522 (IGLLLFLIMFIYAILGMNWFSKV) form a helical membrane-spanning segment. Topologically, residues 1523-1536 (NPESGIDDIFNFKT) are extracellular. An intramembrane region (pore-forming) is located at residues 1537 to 1559 (FASSMLCLFQISTSAGWDSLLSP). Over 1560 to 1579 (MLRSKESCNSSSENCHLPGI) the chain is Extracellular. N-linked (GlcNAc...) asparagine glycosylation is present at asparagine 1568. A helical transmembrane segment spans residues 1580–1604 (ATSYFVSYIIISFLIVVNMYIAVIL). Residues 1605-1791 (ENFNTATEES…GVAKGKVHCD (187 aa)) lie on the Cytoplasmic side of the membrane.

The protein belongs to the sodium channel (TC 1.A.1.10) family. Nav1.9/SCN11A subfamily. In terms of assembly, the voltage-resistant sodium channel consists of an ion conducting pore forming alpha-subunit regulated by one or more auxiliary subunits SCN1B, SCN2B and SCN3B. In terms of tissue distribution, expressed in the dorsal root ganglia and trigeminal ganglia, olfactory bulb, hippocampus, cerebellar cortex, spinal cord, spleen, small intestine and placenta.

Its subcellular location is the cell membrane. The enzyme catalyses Na(+)(in) = Na(+)(out). Its activity is regulated as follows. Activity is not sensitive to inhibition by tetrodotoxin. Sodium channel mediating the voltage-dependent sodium ion permeability of excitable membranes. Assuming opened or closed conformations in response to the voltage difference across the membrane, the protein forms a sodium-selective channel through which sodium ions may pass in accordance with their electrochemical gradient. Involved in membrane depolarization during action potential in nociceptors which function as key relay stations for the electrical transmission of pain signals from the periphery to the central nervous system. Also involved in rapid BDNF-evoked neuronal depolarization. The protein is Sodium channel protein type 11 subunit alpha of Homo sapiens (Human).